Reading from the N-terminus, the 407-residue chain is Na(+)-translocating NADH-quinone reductase subunit F (407 aa).

A helical transmembrane segment spans residues 6-26; that stretch reads IFLAIGMFTAIVLGLVAIILV. A 2Fe-2S ferredoxin-type domain is found at 35 to 127; the sequence is GDVTIQINGE…DMQIRVPEEV (93 aa). 4 residues coordinate [2Fe-2S] cluster: cysteine 70, cysteine 76, cysteine 79, and cysteine 111. The FAD-binding FR-type domain occupies 130–269; that stretch reads VKKWECTVES…YGPFGEFFAK (140 aa). The segment at 272–389 is catalytic; sequence EAEMVFIGGG…PMMNAAVIKM (118 aa).

The protein belongs to the NqrF family. In terms of assembly, composed of six subunits; NqrA, NqrB, NqrC, NqrD, NqrE and NqrF. [2Fe-2S] cluster is required as a cofactor. FAD serves as cofactor.

It is found in the cell inner membrane. The catalysed reaction is a ubiquinone + n Na(+)(in) + NADH + H(+) = a ubiquinol + n Na(+)(out) + NAD(+). Functionally, NQR complex catalyzes the reduction of ubiquinone-1 to ubiquinol by two successive reactions, coupled with the transport of Na(+) ions from the cytoplasm to the periplasm. The first step is catalyzed by NqrF, which accepts electrons from NADH and reduces ubiquinone-1 to ubisemiquinone by a one-electron transfer pathway. This Pseudomonas aeruginosa (strain ATCC 15692 / DSM 22644 / CIP 104116 / JCM 14847 / LMG 12228 / 1C / PRS 101 / PAO1) protein is Na(+)-translocating NADH-quinone reductase subunit F.